The following is a 427-amino-acid chain: Glutamate-1-semialdehyde 2,1-aminomutase (427 aa).

Lys265 carries the post-translational modification N6-(pyridoxal phosphate)lysine.

This sequence belongs to the class-III pyridoxal-phosphate-dependent aminotransferase family. HemL subfamily. As to quaternary structure, homodimer. It depends on pyridoxal 5'-phosphate as a cofactor.

It is found in the cytoplasm. It carries out the reaction (S)-4-amino-5-oxopentanoate = 5-aminolevulinate. The protein operates within porphyrin-containing compound metabolism; protoporphyrin-IX biosynthesis; 5-aminolevulinate from L-glutamyl-tRNA(Glu): step 2/2. The sequence is that of Glutamate-1-semialdehyde 2,1-aminomutase from Teredinibacter turnerae (strain ATCC 39867 / T7901).